The sequence spans 485 residues: 28S rRNA (uridine-N(3))-methyltransferase (485 aa).

Residues Arg-296, Gly-318, and Asn-347 each contribute to the S-adenosyl-L-methionine site.

The protein belongs to the class IV-like SAM-binding methyltransferase superfamily.

The protein localises to the nucleus. The enzyme catalyses uridine in 28S rRNA + S-adenosyl-L-methionine = N(3)-methyluridine in 28S rRNA + S-adenosyl-L-homocysteine + H(+). S-adenosyl-L-methionine-dependent methyltransferase that specifically methylates the uridine in position 3485 of 28S rRNA. In Drosophila melanogaster (Fruit fly), this protein is 28S rRNA (uridine-N(3))-methyltransferase.